The chain runs to 539 residues: Acid-sensing ion channel 4 (539 aa).

Residues 1-68 are Cytoplasmic-facing; the sequence is MPIEIVCKIK…GPGPHGLRRT (68 aa). A helical membrane pass occupies residues 69-89; it reads LWVLALLTSLAAFLYQAASLA. The Extracellular portion of the chain corresponds to 90–438; it reads RGYLTRPHLV…EQRAAYGLSA (349 aa). 2 disulfide bridges follow: Cys118/Cys202 and Cys180/Cys187. Asn191, Asn243, Asn341, and Asn376 each carry an N-linked (GlcNAc...) asparagine glycan. Cystine bridges form between Cys296-Cys375, Cys318-Cys371, Cys322-Cys369, Cys331-Cys353, and Cys333-Cys345. A helical membrane pass occupies residues 439–459; that stretch reads LLGDLGGQMGLFIGASILTLL. The GAS motif; ion selectivity filter motif lies at 452–454; it reads GAS. Residues 460–539 lie on the Cytoplasmic side of the membrane; the sequence is EILDYIYEVS…PGSLFEDFAC (80 aa). The segment at 501–531 is disordered; it reads EQSPCPNRGRAEGGGASNLLPNHHHPHGPPG.

The protein belongs to the amiloride-sensitive sodium channel (TC 1.A.6) family. ASIC4 subfamily. Homotrimer. Heterotrimer; with other ASIC proteins producing functional channels. In terms of tissue distribution, expressed in brain, spinal cord and dorsal root ganglion (DRG). Expressed by a subset of sensory neurons in the DRG. Expressed by granule cells in the cerebellar cortex. In hippocampus, expression is detected in dentate gyrus granule cells, in pyramidal cells of CA1-CA3 subfields and in interneurons of the striatum oriens and radiatum of all subfields. In cerebral cortex expressed in small, medium and large pyramidal cells in layers 2, 3 and 5 respectively. Also expressed in striatum, globus pallidus, inferior and superior calliculi, amygdala, magnocellular preoptic nucleus, islands of Calleja and large neurons of olfactory tubercules.

The protein localises to the cell membrane. In terms of biological role, does not exhibit measurable stand-alone pH-gated sodium channel activity but may form pH-gated heterotrimeric sodium channels. Its activity could also depend on alternative gating mechanisms. This Rattus norvegicus (Rat) protein is Acid-sensing ion channel 4.